A 789-amino-acid chain; its full sequence is Kin of IRRE-like protein 1 (789 aa).

A signal peptide spans 1 to 47; it reads MTLENRSTCLMTCQSSLLPKKPRFLSQKMWAPHLVVAYLIFVTLALA. N-linked (GlcNAc...) asparagine glycosylation is found at asparagine 5, asparagine 78, and asparagine 172. Topologically, residues 48–531 are extracellular; sequence LPGTQTRFSQ…REVLPVGIIA (484 aa). 5 Ig-like C2-type domains span residues 49-147, 152-248, 255-335, 340-419, and 424-520; these read PGTQ…AKLT, PEDT…TSIE, PTVT…TLVN, PRIV…EVPL, and PPII…IQLE. Cysteine 74 and cysteine 132 form a disulfide bridge. 2 cysteine pairs are disulfide-bonded: cysteine 175–cysteine 232 and cysteine 276–cysteine 319. An N-linked (GlcNAc...) asparagine glycan is attached at asparagine 329. Cysteine 361 and cysteine 403 form a disulfide bridge. The Cell attachment site motif lies at 437–439; sequence RGD. Cysteine 445 and cysteine 504 are oxidised to a cystine. Residue asparagine 503 is glycosylated (N-linked (GlcNAc...) asparagine). Residues 532–552 form a helical membrane-spanning segment; that stretch reads GATIGAGILLVFSFAALVFFL. Residues 553-789 lie on the Cytoplasmic side of the membrane; sequence YRRRKGSRKD…RFQQRMQTHV (237 aa). Position 606 is a phosphoserine (serine 606). Residues tyrosine 637 and tyrosine 638 each carry the phosphotyrosine; by FYN modification. Residues tyrosine 654 and tyrosine 657 each carry the phosphotyrosine modification. The tract at residues 687–713 is disordered; sequence RAPASDYGTEPTPSGPSAPGGTDTTSQ. Residues 694 to 712 are compositionally biased toward low complexity; that stretch reads GTEPTPSGPSAPGGTDTTS. Tyrosine 756 carries the phosphotyrosine modification.

Belongs to the immunoglobulin superfamily. Interacts with TJP1/ZO-1 and with NPHS2/podocin (via the C-terminus). Interacts with NPHS1/nephrin (via the Ig-like domains); this interaction is dependent on KIRREL1 glycosylation. Homodimer (via the Ig-like domains). Interacts when tyrosine-phosphorylated with GRB2. Post-translationally, phosphorylation probably regulates the interaction with NPHS2. Phosphorylated at Tyr-637 and Tyr-638 by FYN, leading to GRB2 binding. In terms of processing, N-glycosylated.

The protein resides in the cell membrane. In terms of biological role, required for proper function of the glomerular filtration barrier. It is involved in the maintenance of a stable podocyte architecture with interdigitating foot processes connected by specialized cell-cell junctions, known as the slit diaphragm. It is a signaling protein that needs the presence of TEC kinases to fully trans-activate the transcription factor AP-1. The sequence is that of Kin of IRRE-like protein 1 (Kirrel1) from Rattus norvegicus (Rat).